The primary structure comprises 277 residues: MARSDVLVSADWAESNLDSANIVFVEVDEDTSTYDGDHIAGAIKLDWRADLQDPIKRDFIDTQQFSKLLGDRGISNDNTVILYGGNNNWFAAYAYWYFKLYRHDKVKLLDGGRKKWELDGRPLSTDTVTRPATSYAAAAPDNTIRAFRDEVIASIKIKNLVDVRSPDEFSGKLLAPAHLPQEQSQRPGHIPSAINIPWSKAANEDGTFKSDEQLAKLYADAGLDRLKETIVYCRIGERSSHTWFVLRELLGYQNVKNYDGSWTEYGSLVGVPIELGS.

Rhodanese domains lie at 18 to 125 (DSAN…PLST) and 154 to 274 (SIKI…VPIE). The Cysteine persulfide intermediate role is filled by C233. R238 is a binding site for substrate.

It catalyses the reaction thiosulfate + hydrogen cyanide = thiocyanate + sulfite + 2 H(+). Functionally, may be a sulfotransferase involved in the formation of thiosulfate. The chain is Putative thiosulfate sulfurtransferase (cysA) from Mycobacterium leprae (strain TN).